The sequence spans 20 residues: Ribulose bisphosphate carboxylase small subunit (20 aa).

Belongs to the RuBisCO small chain family. Heterohexadecamer of 8 large and 8 small subunits.

Its subcellular location is the plastid. The protein resides in the chloroplast. Functionally, ruBisCO catalyzes two reactions: the carboxylation of D-ribulose 1,5-bisphosphate, the primary event in carbon dioxide fixation, as well as the oxidative fragmentation of the pentose substrate in the photorespiration process. Both reactions occur simultaneously and in competition at the same active site. Although the small subunit is not catalytic it is essential for maximal activity. The polypeptide is Ribulose bisphosphate carboxylase small subunit (Chattonella marina var. antiqua (Red tide flagellate)).